Reading from the N-terminus, the 133-residue chain is P2Y purinoceptor 2 (133 aa).

The Cytoplasmic portion of the chain corresponds to 1 to 26; the sequence is ISVHRCLGVLRPLHSLRWGRARYARR. The helical transmembrane segment at 27–47 threads the bilayer; it reads VAFAVWVLVLYCQAPVLYFVT. At 48–74 the chain is on the extracellular side; sequence TSTRSSRIICHDTSARELFSHFVAYSS. Residues 75 to 95 form a helical membrane-spanning segment; it reads VMLSLLFAAPFAVILVCYVLM. At 96 to 116 the chain is on the cytoplasmic side; it reads ARRLLKPAYGTSGGLPRAKRK. Residues 117-133 form a helical membrane-spanning segment; that stretch reads SVRTIAIVLTVFVLCFL.

Belongs to the G-protein coupled receptor 1 family.

It is found in the cell membrane. Receptor for ATP and UTP coupled to G-proteins that activate a phosphatidylinositol-calcium second messenger system. In Bos taurus (Bovine), this protein is P2Y purinoceptor 2 (P2RY2).